We begin with the raw amino-acid sequence, 223 residues long: UPF0441 protein YgiB (223 aa).

Positions 178 to 195 (TVPKTAMAPKPATTTTVT) are enriched in low complexity. A disordered region spans residues 178 to 223 (TVPKTAMAPKPATTTTVTRGGFGESVAKQSTLQRSATGTSSRSMGG). The span at 204-223 (AKQSTLQRSATGTSSRSMGG) shows a compositional bias: polar residues.

It belongs to the UPF0441 family.

This is UPF0441 protein YgiB from Escherichia coli (strain ATCC 8739 / DSM 1576 / NBRC 3972 / NCIMB 8545 / WDCM 00012 / Crooks).